We begin with the raw amino-acid sequence, 359 residues long: S-adenosylmethionine:tRNA ribosyltransferase-isomerase (359 aa).

It belongs to the QueA family. As to quaternary structure, monomer.

It is found in the cytoplasm. The enzyme catalyses 7-aminomethyl-7-carbaguanosine(34) in tRNA + S-adenosyl-L-methionine = epoxyqueuosine(34) in tRNA + adenine + L-methionine + 2 H(+). It participates in tRNA modification; tRNA-queuosine biosynthesis. In terms of biological role, transfers and isomerizes the ribose moiety from AdoMet to the 7-aminomethyl group of 7-deazaguanine (preQ1-tRNA) to give epoxyqueuosine (oQ-tRNA). This chain is S-adenosylmethionine:tRNA ribosyltransferase-isomerase, found in Colwellia psychrerythraea (strain 34H / ATCC BAA-681) (Vibrio psychroerythus).